Consider the following 149-residue polypeptide: 3-dehydroquinate dehydratase (149 aa).

The active-site Proton acceptor is the Tyr26. Residues Asn77, His83, and Asp90 each contribute to the substrate site. Catalysis depends on His103, which acts as the Proton donor. Substrate contacts are provided by residues 104–105 (LS) and Arg114.

It belongs to the type-II 3-dehydroquinase family. As to quaternary structure, homododecamer.

It catalyses the reaction 3-dehydroquinate = 3-dehydroshikimate + H2O. The protein operates within metabolic intermediate biosynthesis; chorismate biosynthesis; chorismate from D-erythrose 4-phosphate and phosphoenolpyruvate: step 3/7. Its function is as follows. Catalyzes a trans-dehydration via an enolate intermediate. The chain is 3-dehydroquinate dehydratase from Aeromonas salmonicida (strain A449).